The following is a 532-amino-acid chain: MAKRVAIVGAGVSGLASIKCCLEEGLEPTCFERSDDLGGLWRFTEHVEEGRASLYKSVVSNSCKEMSCYPDFPFPEDYPNYVPNSHFLEYLRMYANQFNLLKCIQFKTKVCSVTKHEDFNTTGQWDVVTLCEGKQESAVFDAVMVCTGFLTNPYLPLDSFPGINTFKGQYFHSRQYKHPDIFKDKSVLVVGMGNSGTDIAVEASHLAKKVFLSTTGGAWVISRVFDSGYPWDMVFMTRFQNMFRNSLPTPIVNWLIAKKMNSWFNHANYGLIPEDRIQLREPVLNDELPGRIITGKVLIKPSIKEVKENSVVFNSSPEEEPIDIIVFATGYTFAFPFLDESVVKVEDGQASLYKYIFPAHLQKPTLAVIGLIKPLGSLLPTGDTQARWAVRVLKGVNKLPPSSVMIQEVNTRKENKPSGFGLCYCKALQSDYIAYIDELLTYIDAKPNMFSLLLTDPHLALTIFFGPCTPYQFRLTGPGKWEGARNAIMTQWDRTFKVTKTRIVKESPSPFASLLKLFSFLALLVAIFQIFL.

Ala2 carries the post-translational modification N-acetylalanine. Over 2-510 (AKRVAIVGAG…TRIVKESPSP (509 aa)) the chain is Lumenal. Residues 9–13 (GAGVS), Glu32, 40–41 (LW), and 61–62 (NS) each bind FAD. 60 to 61 (SN) is an NADP(+) binding site. The N-linked (GlcNAc...) (high mannose) asparagine glycan is linked to Asn120. An NADP(+)-binding site is contributed by 195 to 198 (SGTD). A helical transmembrane segment spans residues 511-531 (FASLLKLFSFLALLVAIFQIF). A topological domain (cytoplasmic) is located at residue Leu532.

The protein belongs to the FMO family. FAD serves as cofactor. Liver.

It localises to the endoplasmic reticulum membrane. It catalyses the reaction hypotaurine + NADPH + O2 + H(+) = taurine + NADP(+) + H2O. It carries out the reaction hypotaurine + NADH + O2 + H(+) = taurine + NAD(+) + H2O. The enzyme catalyses trimethylamine + NADPH + O2 = trimethylamine N-oxide + NADP(+) + H2O. The catalysed reaction is N,N-dimethylaniline + NADPH + O2 + H(+) = N,N-dimethylaniline N-oxide + NADP(+) + H2O. In terms of biological role, broad spectrum monooxygenase that catalyzes the oxygenation of a wide variety of nitrogen- and sulfur-containing compounds including xenobiotics. Catalyzes the S-oxygenation of hypotaurine to produce taurine, an organic osmolyte involved in cell volume regulation as well as a variety of cytoprotective and developmental processes. In vitro, catalyzes the N-oxygenation of trimethylamine (TMA) to produce trimethylamine N-oxide (TMAO) and could therefore participate to the detoxification of this compound that is generated by the action of gut microbiota from dietary precursors such as choline, choline containing compounds, betaine or L-carnitine. The chain is Flavin-containing monooxygenase 1 (FMO1) from Sus scrofa (Pig).